The primary structure comprises 588 residues: Intracellular maltogenic amylase (588 aa).

Ca(2+)-binding residues include N149, S155, G174, and D176. Substrate contacts are provided by H249 and R325. D327 functions as the Nucleophile in the catalytic mechanism. E356 functions as the Proton donor in the catalytic mechanism. Residues 422 to 423 (HD), D467, and R471 contribute to the substrate site.

This sequence belongs to the glycosyl hydrolase 13 family. BbmA subfamily. Monomer or homodimer; in equilibrium. Ca(2+) is required as a cofactor.

It localises to the cytoplasm. In terms of biological role, hydrolyzes beta-cyclodextrin to maltose and glucose, soluble starch to maltose and glucose, and pullulan to panose with trace amounts of maltose and glucose. It is also able to hydrolyze acarbose. Can also exhibit a transglycosylation activity transferring glucose or maltose to another moiety of sugars by forming alpha-(1,6)- and alpha-(1,3)-glycosidic linkages upon the hydrolysis of substrate at concentrations of 5% or higher. The chain is Intracellular maltogenic amylase (bbmA) from Bacillus subtilis.